Reading from the N-terminus, the 1084-residue chain is AP-3 complex subunit beta-1 (1084 aa).

A compositionally biased stretch (polar residues) spans 1–11; the sequence is MSSNSFAYNEQ. The tract at residues 1-26 is disordered; the sequence is MSSNSFAYNEQSGGGEATELGQEATS. Phosphoserine is present on residues Ser-276 and Ser-609. The disordered stretch occupies residues 663–800; it reads AGKAKKENPD…KEKKTKQERN (138 aa). Over residues 666–677 the composition is skewed to basic and acidic residues; that stretch reads AKKENPDKKFYS. Residues 678–717 are compositionally biased toward acidic residues; the sequence is ESEEEEDSSESSSDSESESGSESGEDEEDDRSGDSAEDSG. The segment covering 718–729 has biased composition (low complexity); it reads ESGSEPEAGKGR. Positions 738–753 are enriched in basic and acidic residues; the sequence is GRGDSKDVDKEKENSK. Ser-742 carries the phosphoserine modification. Positions 754-767 are enriched in low complexity; the sequence is TSESSSGESSSIEE. Residues 768–781 are compositionally biased toward acidic residues; it reads SSSDSESESESESE. Positions 782 to 800 are enriched in basic and acidic residues; sequence SESRKVTKEKEKKTKQERN.

Belongs to the adaptor complexes large subunit family. As to quaternary structure, adaptor protein complex 3 (AP-3) is a heterotetramer composed of two large adaptins (delta-type subunit AP3D1 and beta-type subunit AP3B1 or AP3B2), a medium adaptin (mu-type subunit AP3M1 or AP3M2) and a small adaptin (sigma-type subunit APS1 or AP3S2). AP-3 associates with the BLOC-1 complex. Interacts with KIF3A; interaction is direct; interaction is impaired by pyrophosphorylation of AP3B1. Phosphorylated on serine residues. In terms of processing, pyrophosphorylation by 5-diphosphoinositol pentakisphosphate (5-IP7) impairs interaction with KIF3A. Serine pyrophosphorylation is achieved by Mg(2+)-dependent, but enzyme independent transfer of a beta-phosphate from a inositol pyrophosphate to a pre-phosphorylated serine residue.

It is found in the cytoplasmic vesicle. The protein localises to the clathrin-coated vesicle membrane. Its subcellular location is the golgi apparatus. Its function is as follows. Subunit of non-clathrin- and clathrin-associated adaptor protein complex 3 (AP-3) that plays a role in protein sorting in the late-Golgi/trans-Golgi network (TGN) and/or endosomes. The AP complexes mediate both the recruitment of clathrin to membranes and the recognition of sorting signals within the cytosolic tails of transmembrane cargo molecules. AP-3 appears to be involved in the sorting of a subset of transmembrane proteins targeted to lysosomes and lysosome-related organelles. In concert with the BLOC-1 complex, AP-3 is required to target cargos into vesicles assembled at cell bodies for delivery into neurites and nerve terminals. The chain is AP-3 complex subunit beta-1 (AP3B1) from Bos taurus (Bovine).